A 38-amino-acid chain; its full sequence is Toxin Lqh 8/6 (38 aa).

4 cysteine pairs are disulfide-bonded: C2–C19, C5–C28, C16–C33, and C20–C35.

Expressed by the venom gland.

The protein localises to the secreted. Toxin with unknown function in healthy organisms. On glioma cells, interacts with chloride channels (probably ClC-3/CLCN3) and MMP2 at the surface of glioma cells. This complex is then internalized via caveolae, thus inhibiting the chloride channels necessary for cell shrinkage and tumor propagation. The protein is Toxin Lqh 8/6 of Leiurus hebraeus (Hebrew deathstalker scorpion).